Consider the following 229-residue polypeptide: Type III pantothenate kinase (229 aa).

6 to 13 (NIGNSRQH) is an ATP binding site. Substrate is bound by residues Y77 and 81–84 (GIDR). The active-site Proton acceptor is D83. Residue D103 coordinates K(+). ATP is bound at residue T106. A substrate-binding site is contributed by T159.

This sequence belongs to the type III pantothenate kinase family. Homodimer. NH4(+) serves as cofactor. It depends on K(+) as a cofactor.

Its subcellular location is the cytoplasm. It carries out the reaction (R)-pantothenate + ATP = (R)-4'-phosphopantothenate + ADP + H(+). It functions in the pathway cofactor biosynthesis; coenzyme A biosynthesis; CoA from (R)-pantothenate: step 1/5. Catalyzes the phosphorylation of pantothenate (Pan), the first step in CoA biosynthesis. This Gloeobacter violaceus (strain ATCC 29082 / PCC 7421) protein is Type III pantothenate kinase.